Consider the following 336-residue polypeptide: MVVDSSALNVENDWKPERTLVLLGRTGNGKSATGNSILGKTMFQSKARGKFITKECKLHKSKLPNGLTINVIDTPGLFSASSTTDFTIREIVRCLLLAKGGIDAVLLVFSLRNRLTEEEQSTLRTLKILFGSQIVDYIIVVFTNEDALECGETLDDYLEDCPEFQEILEECDDRKVLFDNSYNAPVSKKDRQVHDLLNLVEQISKKNNGKSYMADLSHELRENEATIKEKQKQIEEMKGWSSKQEISQMKKELEKSHNEMLEGIKEKISNQLKESLEDVKEQLAKAQAEREETEKKMNEIQKLSSDEIRRLREQLNKAEKETASLRTELNKKCTVL.

The AIG1-type G domain occupies 15–221 (KPERTLVLLG…YMADLSHELR (207 aa)). The segment at 24 to 31 (GRTGNGKS) is G1. GTP contacts are provided by residues 24 to 32 (GRTGNGKSA) and Ser45. Positions 51–55 (FITKE) are G2. The tract at residues 73-76 (DTPG) is G3. Positions 143–146 (TNED) are G4. Positions 179–181 (DNS) are G5. Asn180 is a GTP binding site. Positions 265 to 328 (KEKISNQLKE…EKETASLRTE (64 aa)) form a coiled coil.

Belongs to the TRAFAC class TrmE-Era-EngA-EngB-Septin-like GTPase superfamily. AIG1/Toc34/Toc159-like paraseptin GTPase family. IAN subfamily. Expressed in pollen grains.

This Arabidopsis thaliana (Mouse-ear cress) protein is Immune-associated nucleotide-binding protein 13.